The following is a 355-amino-acid chain: GTP 3',8-cyclase (355 aa).

In terms of domain architecture, Radical SAM core spans 16–242 (RYGRRATDMR…PDPRARDGAP (227 aa)). Position 25 (arginine 25) interacts with GTP. Cysteine 32 and cysteine 36 together coordinate [4Fe-4S] cluster. Tyrosine 38 is a binding site for S-adenosyl-L-methionine. Position 39 (cysteine 39) interacts with [4Fe-4S] cluster. A GTP-binding site is contributed by arginine 76. Position 80 (glycine 80) interacts with S-adenosyl-L-methionine. Threonine 107 contributes to the GTP binding site. Residue serine 131 participates in S-adenosyl-L-methionine binding. Position 168 (lysine 168) interacts with GTP. Methionine 202 contacts S-adenosyl-L-methionine. Positions 277 and 280 each coordinate [4Fe-4S] cluster. Residue 282–284 (RTR) participates in GTP binding. Position 294 (cysteine 294) interacts with [4Fe-4S] cluster.

It belongs to the radical SAM superfamily. MoaA family. As to quaternary structure, monomer. Requires [4Fe-4S] cluster as cofactor.

The enzyme catalyses GTP + AH2 + S-adenosyl-L-methionine = (8S)-3',8-cyclo-7,8-dihydroguanosine 5'-triphosphate + 5'-deoxyadenosine + L-methionine + A + H(+). It participates in cofactor biosynthesis; molybdopterin biosynthesis. Functionally, catalyzes, together with MoaC, the conversion of 5'-GTP to cyclic pyranopterin monophosphate (cPMP or molybdopterin precursor Z). In terms of biological role, catalyzes the cyclization of GTP to (8S)-3',8-cyclo-7,8-dihydroguanosine 5'-triphosphate. This chain is GTP 3',8-cyclase, found in Paenarthrobacter nicotinovorans (Arthrobacter nicotinovorans).